The primary structure comprises 405 residues: MFNYEELFQTHKTPFYLYDFDKIKQAFLNYKEAFKGRKSLICYALKANSNLSILSLLAHLESGADCVSIGEIQRALKAGIKPYRIVFSGVGKSAFEIEQALKLNILFLNVESFMELKTIETIAQSLGIKARISIRINPNIDAKTHPYISTGLKENKFGVGEKEALEMFLWAKKSAFLEPVSVHFHIGSQLLDLEPIIEASQKVAKIAKSLIALGIDLRFFDVGGGIGVSYENEETIKLYDYAQGILNALQGLDLTIICEPGRSIVAESGELITQVLYEKKAQNKRFVIVDAGMNDFLRPSLYHAKHAIRVITPSKGREISPCDVVGPVCESSDTFLKDAHLPELEPGDKIAIEKVGAYGSSMASQYNSRPKLLELALEDHKIRVIRKREALEDLWRLEEEGLKGV.

Lys46 is modified (N6-(pyridoxal phosphate)lysine). Pyridoxal 5'-phosphate contacts are provided by residues Gly225 and Glu259–Arg262. Substrate is bound by residues Arg262, Arg298, and Tyr302. Catalysis depends on Cys329, which acts as the Proton donor. 2 residues coordinate substrate: Glu330 and Tyr358. Tyr358 lines the pyridoxal 5'-phosphate pocket.

The protein belongs to the Orn/Lys/Arg decarboxylase class-II family. LysA subfamily. Homodimer. Requires pyridoxal 5'-phosphate as cofactor.

The enzyme catalyses meso-2,6-diaminopimelate + H(+) = L-lysine + CO2. Its pathway is amino-acid biosynthesis; L-lysine biosynthesis via DAP pathway; L-lysine from DL-2,6-diaminopimelate: step 1/1. Functionally, specifically catalyzes the decarboxylation of meso-diaminopimelate (meso-DAP) to L-lysine. In Helicobacter pylori (Campylobacter pylori), this protein is Diaminopimelate decarboxylase.